Consider the following 291-residue polypeptide: ATP synthase gamma chain (291 aa).

This sequence belongs to the ATPase gamma chain family. F-type ATPases have 2 components, CF(1) - the catalytic core - and CF(0) - the membrane proton channel. CF(1) has five subunits: alpha(3), beta(3), gamma(1), delta(1), epsilon(1). CF(0) has three main subunits: a, b and c.

It is found in the cell inner membrane. Functionally, produces ATP from ADP in the presence of a proton gradient across the membrane. The gamma chain is believed to be important in regulating ATPase activity and the flow of protons through the CF(0) complex. The protein is ATP synthase gamma chain of Variovorax paradoxus (strain S110).